The following is a 323-amino-acid chain: Arginase, hepatic (323 aa).

The Mn(2+) site is built by H102, D125, H127, and D129. Residues 127 to 131, 138 to 140, and D184 contribute to the substrate site; these read HADIN and SGN. Mn(2+)-binding residues include D233 and D235. Residues T247 and E278 each coordinate substrate.

This sequence belongs to the arginase family. In terms of assembly, homotrimer. The cofactor is Mn(2+).

It catalyses the reaction L-arginine + H2O = urea + L-ornithine. It functions in the pathway nitrogen metabolism; urea cycle; L-ornithine and urea from L-arginine: step 1/1. In Aquarana catesbeiana (American bullfrog), this protein is Arginase, hepatic.